Here is a 616-residue protein sequence, read N- to C-terminus: MIQVLLVIICLAVFPYQGSSIILESGNVNDYEVVYLQKVTAMNKGAVKQPEQKYEDTMQYEFKVNGEPVILHLEKNKDLFSEDYSETHYSPDGREITTNPPVEDHCYYHGRIQNDADSTASISACNGLKGHFQLRGETYFIEPLKIPDSEAHAVYKYENVEKEDEAPKTCGVTQTNWESDELIKKASQLNLTPEQQRYLNSPKYIKLVIVADYIMFLKYGRSLITIRTRIYEIVNLLNVIYRVLNIYIALVGLEIWNNGDKINVLPEAKVTLDLFGKWRETDLLNRRKHDNAQLLTGINFNGPTAGLGYLGSMCNPQYSAGIVQDHNKVNFLVALAMAHEMGHNLGMDHDGIQCTCGAKSCIMSGTLSCEASIRFSNCSQEEHRKYLINKMPQCILNKPLKTDIVSPAVCGNYLVELGEDCDCGSPRDCQNPCCNAATCKLTPGSQCADGECCDQCKFGRAGTVCRPANGECDVSDVCTGQSAECPTDQFQRNGHPCQNNNGYCYNGTCPILGKQCISLFGASATVAQDACFQFNRLGNEYGYCRKENGRKIPCAPQDVKCGRLYCFDNLPEHKNPCQIYYTPRDENKGMVDPGTKCGDGMACSSNGQCVDVNTAY.

The N-terminal stretch at methionine 1–serine 20 is a signal peptide. Positions isoleucine 21–proline 193 are excised as a propeptide. Residue glutamate 194 is modified to Pyrrolidone carboxylic acid (Glu). A Peptidase M12B domain is found at lysine 203–proline 399. 3 cysteine pairs are disulfide-bonded: cysteine 314–cysteine 394, cysteine 354–cysteine 378, and cysteine 356–cysteine 361. Histidine 339 is a binding site for Zn(2+). The Metal-binding signature appears at histidine 339 to aspartate 350. The active-site Proton acceptor is glutamate 340. Zn(2+) contacts are provided by histidine 343 and histidine 349. A glycan (N-linked (GlcNAc...) asparagine) is linked at asparagine 377. A Disintegrin domain is found at proline 407 to asparagine 493. Valine 409, asparagine 412, glutamate 416, glutamate 419, and aspartate 422 together coordinate Ca(2+). Intrachain disulfides connect cysteine 410–cysteine 439, cysteine 421–cysteine 434, cysteine 423–cysteine 429, cysteine 433–cysteine 456, cysteine 447–cysteine 453, cysteine 452–cysteine 478, cysteine 465–cysteine 485, cysteine 472–cysteine 504, cysteine 497–cysteine 509, cysteine 516–cysteine 566, cysteine 531–cysteine 577, cysteine 544–cysteine 554, cysteine 561–cysteine 603, and cysteine 597–cysteine 609. The D/ECD-tripeptide signature appears at glutamate 471 to aspartate 473. 3 residues coordinate Ca(2+): aspartate 473, aspartate 476, and aspartate 488. An N-linked (GlcNAc...) asparagine glycan is attached at asparagine 506.

Belongs to the venom metalloproteinase (M12B) family. P-III subfamily. P-IIIc sub-subfamily. In terms of assembly, homodimer; disulfide-linked. Zn(2+) serves as cofactor. Post-translationally, N-glycosylated. The N-terminus is blocked. Expressed by the venom gland (at protein level). Expressed by the venom gland.

The protein localises to the secreted. With respect to regulation, the proteolytic activity requires Zn(2+) and Ca(2+) ions. The alpha-fibrinogenase activity is completely inhibited by EDTA, but not by PMSF. Zinc metalloprotease that has fibrinogenolytic and hemorrhagic activities. Cleaves insulin B chain readily at '38-Ala-|-Leu-39' bond, and at a significantly slower rate, at '40-Tyr-|-Leu-41' bond. Hydrolyzes isolated extracellular matrix (ECM) bovine fibronectin, and basal membrane (BM) proteins human collagen IV and, to a lesser extent, murine laminin, in vitro. Cleaves murine nidogen (at '350-Ser-|-Phe-351' and '380-Tyr-|-Asn-381' bonds), but not laminin, in a solubilized BM preparation. Hydrolyzes plasma proteins involved in blood coagulation in vitro. It significantly prolongs thrombin time. Has potent alpha-fibrinogenase activity cleaving human fibrinogen alpha chain at '432-Lys-|-Leu-433' bond, but does not cleave beta or gamma chains. Hydrolyzes bovine prothrombin, but does not cleave it at '366-Arg-|-Ile-367' bond, which is necessary for the formation of active alpha-thrombin, however, the cleavage of fragment 1 from it leads to reduced alpha-thrombin formation. Hydrolyzes bovine factor X heavy chain at '211-Ser-|-Leu-212', '213-Asp-|-Leu-214' and '216-Gly-|-Leu-217' bonds activating it only marginally as does not cleave at the physiological activation site. Does not cleave factor X light chain. No hydrolysis or activation of plasminogen. The alpha-fibrinogenase activity likely contributes to its hemorrhagic activity, which in rat can be completely neutralized in vivo by anti-ammodytagin antibodies, which strongly cross-react with this protein. Has very weak collagen-, ADP- and ristocetin-induced platelet aggregation inhibition activity in vitro. The polypeptide is Zinc metalloproteinase-disintegrin-like protein H3 (Vipera ammodytes ammodytes (Western sand viper)).